The chain runs to 120 residues: NAD(P)H-quinone oxidoreductase subunit 3 (120 aa).

A run of 3 helical transmembrane segments spans residues 6 to 26 (GYDA…LALV), 64 to 84 (MFAL…PWAV), and 89 to 109 (LGLL…VALA).

It belongs to the complex I subunit 3 family. In terms of assembly, NDH-1 can be composed of about 15 different subunits; different subcomplexes with different compositions have been identified which probably have different functions.

Its subcellular location is the cellular thylakoid membrane. The catalysed reaction is a plastoquinone + NADH + (n+1) H(+)(in) = a plastoquinol + NAD(+) + n H(+)(out). The enzyme catalyses a plastoquinone + NADPH + (n+1) H(+)(in) = a plastoquinol + NADP(+) + n H(+)(out). In terms of biological role, NDH-1 shuttles electrons from an unknown electron donor, via FMN and iron-sulfur (Fe-S) centers, to quinones in the respiratory and/or the photosynthetic chain. The immediate electron acceptor for the enzyme in this species is believed to be plastoquinone. Couples the redox reaction to proton translocation, and thus conserves the redox energy in a proton gradient. Cyanobacterial NDH-1 also plays a role in inorganic carbon-concentration. In Prochlorococcus marinus (strain MIT 9313), this protein is NAD(P)H-quinone oxidoreductase subunit 3.